A 365-amino-acid chain; its full sequence is Flagellar P-ring protein (365 aa).

The signal sequence occupies residues 1–19 (MIKFLSALILLLVTTAAQA).

Belongs to the FlgI family. The basal body constitutes a major portion of the flagellar organelle and consists of four rings (L,P,S, and M) mounted on a central rod.

The protein localises to the periplasm. The protein resides in the bacterial flagellum basal body. Its function is as follows. Assembles around the rod to form the L-ring and probably protects the motor/basal body from shearing forces during rotation. This chain is Flagellar P-ring protein, found in Escherichia coli O9:H4 (strain HS).